Here is a 71-residue protein sequence, read N- to C-terminus: Protein KleB (71 aa).

The segment at residues 9–28 is a DNA-binding region (H-T-H motif); that stretch reads IETCCRRCGKSIRTLSHTII.

The polypeptide is Protein KleB (kleB) (Escherichia coli).